A 457-amino-acid polypeptide reads, in one-letter code: Pancreatic triacylglycerol lipase (457 aa).

Positions 1–7 (LLLGAVA) are cleaved as a signal peptide. Cystine bridges form between Cys12–Cys18 and Cys99–Cys110. The Nucleophile role is filled by Ser161. Asp185 serves as the catalytic Charge relay system. Ca(2+) contacts are provided by Glu196, Arg199, Asp201, and Asp204. Cys246 and Cys270 are joined by a disulfide. The active-site Charge relay system is the His272. 2 disulfides stabilise this stretch: Cys294–Cys305 and Cys308–Cys313. Asn343 carries N-linked (GlcNAc...) asparagine glycosylation. Positions 347 to 457 (WRYQIAVTLS…EDILLTLTPC (111 aa)) constitute a PLAT domain. A disulfide bridge links Cys441 with Cys457.

It belongs to the AB hydrolase superfamily. Lipase family. As to quaternary structure, forms a 1:1 stoichiometric complex with (pro)colipase/CLPS.

The protein localises to the secreted. It carries out the reaction a triacylglycerol + H2O = a diacylglycerol + a fatty acid + H(+). The catalysed reaction is 1,2,3-tributanoylglycerol + H2O = dibutanoylglycerol + butanoate + H(+). The enzyme catalyses 1,2,3-tri-(9Z-octadecenoyl)-glycerol + H2O = di-(9Z)-octadecenoylglycerol + (9Z)-octadecenoate + H(+). It catalyses the reaction all-trans-retinyl hexadecanoate + H2O = all-trans-retinol + hexadecanoate + H(+). It carries out the reaction 1,2-di-(9Z-octadecenoyl)-glycerol + H2O = (9Z-octadecenoyl)-glycerol + (9Z)-octadecenoate + H(+). Its activity is regulated as follows. Inhibited by bile salts, is reactivated by (pro)colipase/CLPS. Its function is as follows. Plays an important role in fat metabolism. It preferentially splits the esters of long-chain fatty acids at positions 1 and 3, producing mainly 2-monoacylglycerol and free fatty acids, and shows considerably higher activity against insoluble emulsified substrates than against soluble ones. This is Pancreatic triacylglycerol lipase (PNLIP) from Myocastor coypus (Coypu).